A 239-amino-acid chain; its full sequence is Octanoyltransferase (239 aa).

Residues 59–239 (PFSPQAVWLL…KRRFKLNWEK (181 aa)) enclose the BPL/LPL catalytic domain. Substrate is bound by residues 101–108 (RGGEVTHH), 168–170 (SIG), and 181–183 (GFS). Cysteine 199 (acyl-thioester intermediate) is an active-site residue.

Belongs to the LipB family.

Its subcellular location is the cytoplasm. It carries out the reaction octanoyl-[ACP] + L-lysyl-[protein] = N(6)-octanoyl-L-lysyl-[protein] + holo-[ACP] + H(+). It functions in the pathway protein modification; protein lipoylation via endogenous pathway; protein N(6)-(lipoyl)lysine from octanoyl-[acyl-carrier-protein]: step 1/2. Its function is as follows. Catalyzes the transfer of endogenously produced octanoic acid from octanoyl-acyl-carrier-protein onto the lipoyl domains of lipoate-dependent enzymes. Lipoyl-ACP can also act as a substrate although octanoyl-ACP is likely to be the physiological substrate. This is Octanoyltransferase from Prochlorococcus marinus (strain NATL2A).